The following is a 321-amino-acid chain: Probable membrane-associated kinase regulator 3 (321 aa).

Residues 297–314 (KSNVTESELCSSRTSVST) are compositionally biased toward polar residues. A disordered region spans residues 297–321 (KSNVTESELCSSRTSVSTCGDLDKD).

It is found in the cell membrane. This Arabidopsis thaliana (Mouse-ear cress) protein is Probable membrane-associated kinase regulator 3 (MAKR3).